Here is a 143-residue protein sequence, read N- to C-terminus: Large ribosomal subunit protein uL11 (143 aa).

This sequence belongs to the universal ribosomal protein uL11 family. In terms of assembly, part of the ribosomal stalk of the 50S ribosomal subunit. Interacts with L10 and the large rRNA to form the base of the stalk. L10 forms an elongated spine to which L12 dimers bind in a sequential fashion forming a multimeric L10(L12)X complex. One or more lysine residues are methylated.

Forms part of the ribosomal stalk which helps the ribosome interact with GTP-bound translation factors. The chain is Large ribosomal subunit protein uL11 from Paracidovorax citrulli (strain AAC00-1) (Acidovorax citrulli).